We begin with the raw amino-acid sequence, 291 residues long: 4-diphosphocytidyl-2-C-methyl-D-erythritol kinase (291 aa).

Lys11 is an active-site residue. 95–105 is an ATP binding site; sequence PVAAGMAGGSS. Asp137 is a catalytic residue.

Belongs to the GHMP kinase family. IspE subfamily.

The enzyme catalyses 4-CDP-2-C-methyl-D-erythritol + ATP = 4-CDP-2-C-methyl-D-erythritol 2-phosphate + ADP + H(+). It participates in isoprenoid biosynthesis; isopentenyl diphosphate biosynthesis via DXP pathway; isopentenyl diphosphate from 1-deoxy-D-xylulose 5-phosphate: step 3/6. In terms of biological role, catalyzes the phosphorylation of the position 2 hydroxy group of 4-diphosphocytidyl-2C-methyl-D-erythritol. This Lachnoclostridium phytofermentans (strain ATCC 700394 / DSM 18823 / ISDg) (Clostridium phytofermentans) protein is 4-diphosphocytidyl-2-C-methyl-D-erythritol kinase.